A 539-amino-acid polypeptide reads, in one-letter code: Chaperonin GroEL (539 aa).

Residues 29–32, 86–90, glycine 413, 476–478, and aspartate 492 each bind ATP; these read TIGP, DGTTT, and NAA.

Belongs to the chaperonin (HSP60) family. As to quaternary structure, forms a cylinder of 14 subunits composed of two heptameric rings stacked back-to-back. Interacts with the co-chaperonin GroES.

Its subcellular location is the cytoplasm. It carries out the reaction ATP + H2O + a folded polypeptide = ADP + phosphate + an unfolded polypeptide.. In terms of biological role, together with its co-chaperonin GroES, plays an essential role in assisting protein folding. The GroEL-GroES system forms a nano-cage that allows encapsulation of the non-native substrate proteins and provides a physical environment optimized to promote and accelerate protein folding. The sequence is that of Chaperonin GroEL from Leuconostoc mesenteroides subsp. mesenteroides (strain ATCC 8293 / DSM 20343 / BCRC 11652 / CCM 1803 / JCM 6124 / NCDO 523 / NBRC 100496 / NCIMB 8023 / NCTC 12954 / NRRL B-1118 / 37Y).